Consider the following 144-residue polypeptide: Bacilliredoxin BC_2157 (144 aa).

The protein belongs to the bacilliredoxin family.

This is Bacilliredoxin BC_2157 from Bacillus cereus (strain ATCC 14579 / DSM 31 / CCUG 7414 / JCM 2152 / NBRC 15305 / NCIMB 9373 / NCTC 2599 / NRRL B-3711).